We begin with the raw amino-acid sequence, 78 residues long: Serine rich endogenous peptide 12 (78 aa).

The first 24 residues, 1–24 (MRNTISSKMGQVLIVLLLLCTVLC), serve as a signal peptide directing secretion. The propeptide at 25–43 (RTESALPSGQHSVLLTGRR) is removed in mature form. The disordered stretch occupies residues 47–78 (SGASGPVRSSQSSQAGGRFNDADPIAIDYGKY). The short motif at 50 to 64 (SGPVRSSQSSQAGGR) is the SCOOP motif element. Positions 56 to 58 (SQS) match the SxS motif essential for MIK2 binding motif.

It belongs to the serine rich endogenous peptide (SCOOP) phytocytokine family. Interacts with MIK2 (via extracellular leucine-rich repeat domain); this interaction triggers the formation of complex between MIK2 and the BAK1/SERK3 and SERK4 coreceptors, and subsequent BAK1 activation by phosphorylation on 'Ser-612'. Mostly expressed in the whole root system, and, to a lower extent, in seedlings shoots.

The protein localises to the cell membrane. It is found in the secreted. It localises to the extracellular space. The protein resides in the apoplast. Functionally, brassicaceae-specific phytocytokine (plant endogenous peptide released into the apoplast) perceived by MIK2 in a BAK1/SERK3 and SERK4 coreceptors-dependent manner, that modulates various physiological and antimicrobial processes including root growth prevention, phospholipid signaling pathway activation (e.g. accumulation of phosphatidic acid (PA), but transient reduction of phosphatidylinositol 4,5-bisphosphate (PIP(2)) levels) and reactive oxygen species (ROS) response regulation. Moderates primary root growth, and regulates root meristems and cell elongation; this root growth regulation is associated with the modulation of ROS metabolism and alteration of cell wall structure, and depends on variations in many genes expression. Promotes ROS (e.g. superoxide anion O(2) and hydrogen peroxide H(2)O(2)) production and MAPK (e.g. MPK3, MPK4 and MPK6) activation in a MIK2-dependent manner, thus leading to the up-regulation of immune-related marker genes (e.g. WRKY30, WRKY33 and CYP81F2). Involved in biotic and oxidative stress responses; acts as a negative regulator of defense against necrotrophic pathogens such as the bacteria Erwinia amylovora and the fungus Alternaria brassicicola. Able to prime defense responses against the pathogenic bacteria Pseudomonas syringae pv. tomato DC3000. Contributes to the triggering of defense responses toward generalist herbivores such as Spodoptera littoralis, probably via the activation of jasmonate and indole glucosinolate biosynthesis. Triggers the expression of several PROSCOOP genes (e.g. PROSCOOP3, PROSCOOP7, PROSCOOP12 and PROSCOOP13). The sequence is that of Serine rich endogenous peptide 12 from Arabidopsis thaliana (Mouse-ear cress).